The following is a 59-amino-acid chain: MAVQQNKKSPSKRGMHRSHDFLTNPPLAVEPTSGEIHLRHHVSPNGYYRGRKVLPAKGE.

Residues 1-59 (MAVQQNKKSPSKRGMHRSHDFLTNPPLAVEPTSGEIHLRHHVSPNGYYRGRKVLPAKGE) form a disordered region. Basic residues predominate over residues 49–59 (RGRKVLPAKGE).

Belongs to the bacterial ribosomal protein bL32 family.

The chain is Large ribosomal subunit protein bL32 from Methylobacillus flagellatus (strain ATCC 51484 / DSM 6875 / VKM B-1610 / KT).